The primary structure comprises 411 residues: Serine--tRNA ligase (411 aa).

Position 226-228 (226-228 (TSE)) interacts with L-serine. 257–259 (RKE) is an ATP binding site. Glu-280 is a binding site for L-serine. 344–347 (EISS) is a binding site for ATP. L-serine is bound at residue Ser-379.

The protein belongs to the class-II aminoacyl-tRNA synthetase family. Type-1 seryl-tRNA synthetase subfamily. As to quaternary structure, homodimer. The tRNA molecule binds across the dimer.

The protein localises to the cytoplasm. The catalysed reaction is tRNA(Ser) + L-serine + ATP = L-seryl-tRNA(Ser) + AMP + diphosphate + H(+). It carries out the reaction tRNA(Sec) + L-serine + ATP = L-seryl-tRNA(Sec) + AMP + diphosphate + H(+). It participates in aminoacyl-tRNA biosynthesis; selenocysteinyl-tRNA(Sec) biosynthesis; L-seryl-tRNA(Sec) from L-serine and tRNA(Sec): step 1/1. Its function is as follows. Catalyzes the attachment of serine to tRNA(Ser). Is also able to aminoacylate tRNA(Sec) with serine, to form the misacylated tRNA L-seryl-tRNA(Sec), which will be further converted into selenocysteinyl-tRNA(Sec). This Campylobacter jejuni subsp. jejuni serotype O:6 (strain 81116 / NCTC 11828) protein is Serine--tRNA ligase.